We begin with the raw amino-acid sequence, 187 residues long: Elongation factor P (187 aa).

It belongs to the elongation factor P family.

It localises to the cytoplasm. The protein operates within protein biosynthesis; polypeptide chain elongation. Functionally, involved in peptide bond synthesis. Stimulates efficient translation and peptide-bond synthesis on native or reconstituted 70S ribosomes in vitro. Probably functions indirectly by altering the affinity of the ribosome for aminoacyl-tRNA, thus increasing their reactivity as acceptors for peptidyl transferase. In Frankia casuarinae (strain DSM 45818 / CECT 9043 / HFP020203 / CcI3), this protein is Elongation factor P.